The chain runs to 911 residues: Nitrate reductase [NADH], clone PBNBR1405 (911 aa).

The segment at 1-68 is disordered; sequence MATSVDNRHY…RFDSSDDEDE (68 aa). Basic and acidic residues predominate over residues 49-62; sequence KSVDKTTKEDRFDS. Mo-molybdopterin is bound at residue C191. One can recognise a Cytochrome b5 heme-binding domain in the interval 539–614; it reads SKMYSMSEVR…LEDYRIGELI (76 aa). Heme contacts are provided by H574 and H597. Positions 654-766 constitute an FAD-binding FR-type domain; the sequence is REKVPVKLIE…KGPLGHIEYQ (113 aa). FAD contacts are provided by residues 706–709, 723–727, F728, F735, 740–742, and T793; these read RAYT, VIKVY, and LMS.

This sequence belongs to the nitrate reductase family. In terms of assembly, homodimer. FAD is required as a cofactor. Heme serves as cofactor. The cofactor is Mo-molybdopterin.

It carries out the reaction nitrite + NAD(+) + H2O = nitrate + NADH + H(+). Its function is as follows. Nitrate reductase is a key enzyme involved in the first step of nitrate assimilation in plants, fungi and bacteria. The chain is Nitrate reductase [NADH], clone PBNBR1405 (NIA1) from Brassica napus (Rape).